The chain runs to 63 residues: 2-hydroxymuconate tautomerase (63 aa).

The active-site Proton acceptor; via imino nitrogen is Pro2.

Belongs to the 4-oxalocrotonate tautomerase family. Homohexamer.

The catalysed reaction is (2Z,4E)-2-hydroxyhexa-2,4-dienedioate = (3E)-2-oxohex-3-enedioate. The protein operates within xenobiotic degradation; toluene degradation. Functionally, catalyzes the ketonization of 2-hydroxymuconate stereoselectively to yield 2-oxo-3-hexenedioate. The chain is 2-hydroxymuconate tautomerase (dmpI) from Pseudomonas sp. (strain CF600).